Consider the following 195-residue polypeptide: Large ribosomal subunit protein uL5 (195 aa).

Belongs to the universal ribosomal protein uL5 family. In terms of assembly, part of the 50S ribosomal subunit; part of the 5S rRNA/L5/L18/L25 subcomplex. Contacts the 5S rRNA and the P site tRNA. Forms a bridge to the 30S subunit in the 70S ribosome.

This is one of the proteins that bind and probably mediate the attachment of the 5S RNA into the large ribosomal subunit, where it forms part of the central protuberance. In the 70S ribosome it contacts protein S13 of the 30S subunit (bridge B1b), connecting the 2 subunits; this bridge is implicated in subunit movement. Contacts the P site tRNA; the 5S rRNA and some of its associated proteins might help stabilize positioning of ribosome-bound tRNAs. The sequence is that of Large ribosomal subunit protein uL5 from Leifsonia xyli subsp. xyli (strain CTCB07).